Reading from the N-terminus, the 396-residue chain is Chaperone protein DnaJ (396 aa).

The 66-residue stretch at 6–71 (DYYEVLEVTK…DKRSRYDQFG (66 aa)) folds into the J domain. The CR-type zinc-finger motif lies at 154–236 (GVEKKFKLKK…CGGDGIVYGE (83 aa)). The Zn(2+) site is built by C167, C170, C184, C187, C210, C213, C224, and C227. 4 CXXCXGXG motif repeats span residues 167–174 (CNHCHGTG), 184–191 (CPTCKGSG), 210–217 (CPTCNGEG), and 224–231 (CKECGGDG).

This sequence belongs to the DnaJ family. As to quaternary structure, homodimer. Zn(2+) is required as a cofactor.

It is found in the cytoplasm. Participates actively in the response to hyperosmotic and heat shock by preventing the aggregation of stress-denatured proteins and by disaggregating proteins, also in an autonomous, DnaK-independent fashion. Unfolded proteins bind initially to DnaJ; upon interaction with the DnaJ-bound protein, DnaK hydrolyzes its bound ATP, resulting in the formation of a stable complex. GrpE releases ADP from DnaK; ATP binding to DnaK triggers the release of the substrate protein, thus completing the reaction cycle. Several rounds of ATP-dependent interactions between DnaJ, DnaK and GrpE are required for fully efficient folding. Also involved, together with DnaK and GrpE, in the DNA replication of plasmids through activation of initiation proteins. The polypeptide is Chaperone protein DnaJ (Bacteroides thetaiotaomicron (strain ATCC 29148 / DSM 2079 / JCM 5827 / CCUG 10774 / NCTC 10582 / VPI-5482 / E50)).